We begin with the raw amino-acid sequence, 285 residues long: ATP synthase gamma chain (285 aa).

The protein belongs to the ATPase gamma chain family. In terms of assembly, F-type ATPases have 2 components, CF(1) - the catalytic core - and CF(0) - the membrane proton channel. CF(1) has five subunits: alpha(3), beta(3), gamma(1), delta(1), epsilon(1). CF(0) has three main subunits: a, b and c.

It localises to the cell membrane. Functionally, produces ATP from ADP in the presence of a proton gradient across the membrane. The gamma chain is believed to be important in regulating ATPase activity and the flow of protons through the CF(0) complex. In Lysinibacillus sphaericus (strain C3-41), this protein is ATP synthase gamma chain.